Reading from the N-terminus, the 161-residue chain is Copper transporter 1 (161 aa).

2 helical membrane-spanning segments follow: residues 55–75 (GGMY…VEFL) and 109–129 (VAYL…LVAV).

This sequence belongs to the copper transporter (Ctr) (TC 1.A.56) family. SLC31A subfamily. As to quaternary structure, self-interacts. Interacts with SWEET11 and COPT2.

Its subcellular location is the cell membrane. Functionally, involved in the transport of copper, in cooperation with SWEET11 and COPT2. Contributes to the removal of copper (Cu) from xylem, and thus to the sensitivity toward bacterial pathogens such as X.oryzae pv. oryzae (Xoo). The chain is Copper transporter 1 (COPT1) from Oryza sativa subsp. japonica (Rice).